The sequence spans 365 residues: IgG receptor FcRn large subunit p51 (365 aa).

An N-terminal signal peptide occupies residues 1 to 21 (MGMPLPWALSLLLVLLPQTWG). Residues 22 to 110 (SETRPPLMYH…KTLEKILNGT (89 aa)) are alpha-1. The Extracellular portion of the chain corresponds to 22 to 297 (SETRPPLMYH…VDLDSSARSS (276 aa)). Asn-108, Asn-125, Asn-149, and Asn-246 each carry an N-linked (GlcNAc...) asparagine glycan. Positions 111–200 (YTLQGLLGCE…ERGRRNLEWK (90 aa)) are alpha-2. 2 disulfide bridges follow: Cys-119-Cys-182 and Cys-221-Cys-275. The tract at residues 201–290 (EPPSMRLKAR…GLAQPLTVDL (90 aa)) is alpha-3. One can recognise an Ig-like C1-type domain in the interval 202-289 (PPSMRLKARP…EGLAQPLTVD (88 aa)). The connecting peptide stretch occupies residues 291–297 (DSSARSS). The helical transmembrane segment at 298 to 321 (VPVVGIVLGLLLVVVAIAGGVLLW) threads the bilayer. Over 322–365 (GRMRSGLPAPWLSLSGDDSGDLLPGGNLPPEAEPQGANAFPATS) the chain is Cytoplasmic. Phosphoserine is present on Ser-334. Residues 343–365 (LLPGGNLPPEAEPQGANAFPATS) form a disordered region.

The protein belongs to the immunoglobulin superfamily. In terms of assembly, fcRn complex consists of two subunits: p51, and p14 which is equivalent to beta-2-microglobulin. It forms an MHC class I-like heterodimer. Interacts with albumin/ALB; this interaction regulates ALB homeostasis. In terms of tissue distribution, intestinal epithelium of suckling rodents. Expressed in neonatal intestine and fetal yolk sac.

It is found in the cell membrane. Its subcellular location is the endosome membrane. Functionally, cell surface receptor that transfers passive humoral immunity from the mother to the newborn. Binds to the Fc region of monomeric immunoglobulin gamma and mediates its selective uptake from milk. IgG in the milk is bound at the apical surface of the intestinal epithelium. The resultant FcRn-IgG complexes are transcytosed across the intestinal epithelium and IgG is released from FcRn into blood or tissue fluids. Throughout life, contributes to effective humoral immunity by recycling IgG and extending its half-life in the circulation. Mechanistically, monomeric IgG binding to FcRn in acidic endosomes of endothelial and hematopoietic cells recycles IgG to the cell surface where it is released into the circulation. In addition of IgG, regulates homeostasis of the other most abundant circulating protein albumin/ALB. The protein is IgG receptor FcRn large subunit p51 (Fcgrt) of Mus musculus (Mouse).